Consider the following 308-residue polypeptide: D-alanine--D-alanine ligase (308 aa).

The 200-residue stretch at 103-302 (KFVFRAAGLP…YGELVSWMVE (200 aa)) folds into the ATP-grasp domain. 130–184 (MDPPYVIKPVSEGSSVGVFIVRAGDNRPPAELTSAEWNLGDEVMAERYIAGRELT) serves as a coordination point for ATP. Positions 252, 269, and 271 each coordinate Mg(2+).

Belongs to the D-alanine--D-alanine ligase family. Mg(2+) is required as a cofactor. Mn(2+) serves as cofactor.

The protein localises to the cytoplasm. The enzyme catalyses 2 D-alanine + ATP = D-alanyl-D-alanine + ADP + phosphate + H(+). Its pathway is cell wall biogenesis; peptidoglycan biosynthesis. Cell wall formation. In Parvibaculum lavamentivorans (strain DS-1 / DSM 13023 / NCIMB 13966), this protein is D-alanine--D-alanine ligase.